A 540-amino-acid polypeptide reads, in one-letter code: Chaperonin GroEL (540 aa).

Residues threonine 29 to proline 32, aspartate 86 to threonine 90, glycine 413, asparagine 476 to alanine 478, and aspartate 492 contribute to the ATP site.

This sequence belongs to the chaperonin (HSP60) family. In terms of assembly, forms a cylinder of 14 subunits composed of two heptameric rings stacked back-to-back. Interacts with the co-chaperonin GroES.

The protein resides in the cytoplasm. The catalysed reaction is ATP + H2O + a folded polypeptide = ADP + phosphate + an unfolded polypeptide.. Together with its co-chaperonin GroES, plays an essential role in assisting protein folding. The GroEL-GroES system forms a nano-cage that allows encapsulation of the non-native substrate proteins and provides a physical environment optimized to promote and accelerate protein folding. In Streptococcus gordonii (strain Challis / ATCC 35105 / BCRC 15272 / CH1 / DL1 / V288), this protein is Chaperonin GroEL.